The following is a 621-amino-acid chain: MSVEVDKHRNTLQYHKKNPYSPLFSPISTYRCYPRVLNNPSESRRSASFSGIYKKRTNTSRFNYLNDRRVLSMEESMKDGSDRASKAGFIGGIRETLWNSGKYLWHTFVKNEPRNFDGSEVEASGNSDVESRSSGSRSSDVPYGLRENYSSDTRKHKFDTSTWALPNKRRRIESEGVGTPSTSPISSLASQKSNCDSDNSITFSRDPFGWNKWKTSAIGSNSENNTSDQKNSYDRRQYGTAFIRKKKVAKQNINNTKLVSRAQSEEVTYLRQIFNGEYKVPKILKEERERQLKLMDMDKEKDTGLKKSIIDLTEKIKTILIENNKNRLQTRNENDDDLVFVKEKKISSLERKHKDYLNQKLKFDRSILEFEKDFKRYNEILNERKKIQEDLKKKKEQLAKKKLVPELNEKDDDQVQKALASRENTQLMNRDNIEITVRDFKTLAPRRWLNDTIIEFFMKYIEKSTPNTVAFNSFFYTNLSERGYQGVRRWMKRKKTQIDKLDKIFTPINLNQSHWALGIIDLKKKTIGYVDSLSNGPNAMSFAILTDLQKYVMEESKHTIGEDFDLIHLDCPQQPNGYDCGIYVCMNTLYGSADAPLDFDYKDAIRMRRFIAHLILTDALK.

S2 carries the post-translational modification N-acetylserine. A phosphoserine mark is found at S21 and S25. Disordered regions lie at residues 116–150 (FDGS…ENYS) and 169–196 (RRRI…SNCD). Positions 124–141 (SGNSDVESRSSGSRSSDV) are enriched in low complexity. Residue T179 is modified to Phosphothreonine. The segment covering 179–196 (TPSTSPISSLASQKSNCD) has biased composition (polar residues). S264 carries the phosphoserine modification. The segment at 432-621 (NIEITVRDFK…AHLILTDALK (190 aa)) is protease. Active-site residues include H514, D531, and C580.

It belongs to the peptidase C48 family.

The enzyme catalyses Hydrolysis of the alpha-linked peptide bond in the sequence Gly-Gly-|-Ala-Thr-Tyr at the C-terminal end of the small ubiquitin-like modifier (SUMO) propeptide, Smt3, leading to the mature form of the protein. A second reaction involves the cleavage of an epsilon-linked peptide bond between the C-terminal glycine of the mature SUMO and the lysine epsilon-amino group of the target protein.. Functionally, protease that catalyzes two essential functions in the SUMO pathway: processing of full-length SMT3 to its mature form and deconjugation of SMT3 from targeted proteins. Has an essential role in the G2/M phase of the cell cycle. In Saccharomyces cerevisiae (strain ATCC 204508 / S288c) (Baker's yeast), this protein is Ubiquitin-like-specific protease 1 (ULP1).